Reading from the N-terminus, the 445-residue chain is tRNA modification GTPase MnmE (445 aa).

Residues Arg-21, Glu-78, and Lys-117 each contribute to the (6S)-5-formyl-5,6,7,8-tetrahydrofolate site. The TrmE-type G domain occupies Gly-213–Val-370. GTP-binding positions include Asn-223 to Thr-228, Thr-242 to Thr-248, and Asp-267 to Gly-270. Mg(2+) contacts are provided by Ser-227 and Thr-248. Lys-445 contacts (6S)-5-formyl-5,6,7,8-tetrahydrofolate.

This sequence belongs to the TRAFAC class TrmE-Era-EngA-EngB-Septin-like GTPase superfamily. TrmE GTPase family. In terms of assembly, homodimer. Heterotetramer of two MnmE and two MnmG subunits. It depends on K(+) as a cofactor.

Its subcellular location is the cytoplasm. Exhibits a very high intrinsic GTPase hydrolysis rate. Involved in the addition of a carboxymethylaminomethyl (cmnm) group at the wobble position (U34) of certain tRNAs, forming tRNA-cmnm(5)s(2)U34. This chain is tRNA modification GTPase MnmE, found in Phenylobacterium zucineum (strain HLK1).